We begin with the raw amino-acid sequence, 241 residues long: Probable transcriptional regulatory protein Daro_4067 (241 aa).

Residues 1–22 (MAGHSKWANIQHRKGRQDEKRG) are disordered.

The protein belongs to the TACO1 family.

It localises to the cytoplasm. This is Probable transcriptional regulatory protein Daro_4067 from Dechloromonas aromatica (strain RCB).